Here is a 164-residue protein sequence, read N- to C-terminus: CDP-archaeol synthase (164 aa).

4 helical membrane-spanning segments follow: residues Leu-3–Ala-23, Tyr-51–Leu-71, Leu-77–Ile-97, and Leu-122–Ile-142.

This sequence belongs to the CDP-archaeol synthase family. Mg(2+) is required as a cofactor.

It is found in the cell membrane. It carries out the reaction 2,3-bis-O-(geranylgeranyl)-sn-glycerol 1-phosphate + CTP + H(+) = CDP-2,3-bis-O-(geranylgeranyl)-sn-glycerol + diphosphate. It participates in membrane lipid metabolism; glycerophospholipid metabolism. Its function is as follows. Catalyzes the formation of CDP-2,3-bis-(O-geranylgeranyl)-sn-glycerol (CDP-archaeol) from 2,3-bis-(O-geranylgeranyl)-sn-glycerol 1-phosphate (DGGGP) and CTP. This reaction is the third ether-bond-formation step in the biosynthesis of archaeal membrane lipids. In Pyrobaculum islandicum (strain DSM 4184 / JCM 9189 / GEO3), this protein is CDP-archaeol synthase.